Consider the following 525-residue polypeptide: GMP synthase [glutamine-hydrolyzing] (525 aa).

Residues Arg9–Leu207 enclose the Glutamine amidotransferase type-1 domain. The Nucleophile role is filled by Cys86. Catalysis depends on residues His181 and Glu183. The GMPS ATP-PPase domain maps to Trp208–Arg400. Ser235–Ser241 serves as a coordination point for ATP.

In terms of assembly, homodimer.

It carries out the reaction XMP + L-glutamine + ATP + H2O = GMP + L-glutamate + AMP + diphosphate + 2 H(+). The protein operates within purine metabolism; GMP biosynthesis; GMP from XMP (L-Gln route): step 1/1. Its function is as follows. Catalyzes the synthesis of GMP from XMP. This is GMP synthase [glutamine-hydrolyzing] from Pseudomonas savastanoi pv. phaseolicola (strain 1448A / Race 6) (Pseudomonas syringae pv. phaseolicola (strain 1448A / Race 6)).